Reading from the N-terminus, the 332-residue chain is Galectin-4 (332 aa).

2 consecutive Galectin domains span residues Tyr-19–Ile-150 and Phe-203–Ile-332. An a beta-D-galactoside-binding site is contributed by Trp-265–Lys-271. Ser-267 carries the post-translational modification Phosphoserine.

As to quaternary structure, monomer.

Functionally, galectin that binds lactose and a related range of sugars. May be involved in the assembly of adherens junctions. In Bos taurus (Bovine), this protein is Galectin-4 (LGALS4).